The chain runs to 410 residues: Cysteine desulfurase IscS (410 aa).

Residues 80-81 (AT), N160, Q188, and 208-210 (SGH) contribute to the pyridoxal 5'-phosphate site. Position 211 is an N6-(pyridoxal phosphate)lysine (K211). Pyridoxal 5'-phosphate is bound at residue T248. The Cysteine persulfide intermediate role is filled by C334. C334 is a binding site for [2Fe-2S] cluster.

Belongs to the class-V pyridoxal-phosphate-dependent aminotransferase family. NifS/IscS subfamily. Homodimer. Forms a heterotetramer with IscU, interacts with other sulfur acceptors. Requires pyridoxal 5'-phosphate as cofactor.

It is found in the cytoplasm. It carries out the reaction (sulfur carrier)-H + L-cysteine = (sulfur carrier)-SH + L-alanine. The protein operates within cofactor biosynthesis; iron-sulfur cluster biosynthesis. Master enzyme that delivers sulfur to a number of partners involved in Fe-S cluster assembly, tRNA modification or cofactor biosynthesis. Catalyzes the removal of elemental sulfur atoms from cysteine to produce alanine. Functions as a sulfur delivery protein for Fe-S cluster synthesis onto IscU, an Fe-S scaffold assembly protein, as well as other S acceptor proteins. This is Cysteine desulfurase IscS from Rickettsia bellii (strain OSU 85-389).